The primary structure comprises 553 residues: Heterochromatin protein 1-binding protein 3 (553 aa).

Ala-2 is subject to N-acetylalanine. Ser-6 carries the phosphoserine modification. Disordered stretches follow at residues 29–134 (KLGE…KTIP) and 140–159 (SASQLARAQKQTPMASSPRP). The residue at position 51 (Thr-51) is a Phosphothreonine. Positions 60–71 (GEEEKPEPDISS) are enriched in acidic residues. A Glycyl lysine isopeptide (Lys-Gly) (interchain with G-Cter in SUMO2) cross-link involves residue Lys-64. At Thr-85 the chain carries Phosphothreonine. Positions 94–127 (EQPKGEPENEEKEENKSSEETKKDEKDQSKEKEK) are enriched in basic and acidic residues. A Glycyl lysine isopeptide (Lys-Gly) (interchain with G-Cter in SUMO2) cross-link involves residue Lys-97. Polar residues predominate over residues 140 to 154 (SASQLARAQKQTPMA). 3 positions are modified to phosphoserine: Ser-142, Ser-155, and Ser-156. The region spanning 157–232 (PRPKMDAILT…GASGSFVVVQ (76 aa)) is the H15 1 domain. Residue Lys-190 is modified to N6-acetyllysine. The interval 230–255 (VVQKSRKTPQKSRNRKNRSSAVDPEP) is disordered. Residues 233–247 (KSRKTPQKSRNRKNR) show a composition bias toward basic residues. 2 positions are modified to phosphoserine: Ser-248 and Ser-249. A PxVxL motif motif is present at residues 255 to 259 (PQVKL). H15 domains lie at 255 to 330 (PQVK…QLKK) and 337 to 413 (LGGS…QLCF). Lys-258 is covalently cross-linked (Glycyl lysine isopeptide (Lys-Gly) (interchain with G-Cter in SUMO2)). The tract at residues 422–553 (LFPKKEPDDS…TMKKSFRVKK (132 aa)) is disordered. A compositionally biased stretch (acidic residues) spans 430 to 450 (DSRDEDEDEDESSEEDSEDEE). 3 positions are modified to phosphoserine: Ser-441, Ser-442, and Ser-446. Positions 489–510 (GKARPLPKKAPPKAKTPAKKTR) are enriched in basic residues. The span at 517–527 (KKPSGGSSKKP) shows a compositional bias: low complexity. The segment covering 543 to 553 (STMKKSFRVKK) has biased composition (basic residues).

As to quaternary structure, interacts (via PxVxL motif) with CBX5 (via Trp-174).

It localises to the nucleus. The protein resides in the chromosome. Its function is as follows. Component of heterochromatin that maintains heterochromatin integrity during G1/S progression and regulates the duration of G1 phase to critically influence cell proliferative capacity. Mediates chromatin condensation during hypoxia, leading to increased tumor cell viability, radio-resistance, chemo-resistance and self-renewal. This is Heterochromatin protein 1-binding protein 3 (HP1BP3) from Homo sapiens (Human).